The primary structure comprises 130 residues: SDVPVHHRTDHDRASLLTGSSRKSSVDSAGGSLFEASSRASSPSSSSSSECSDTESHDIHSLCSEDDCQEVLRQILQHDQPVHISIKLHVTEDQSTNWMSILNPNNNILYVAFPTDFAPAGSKETFTSLL.

Positions Ser-1 to Ala-14 are enriched in basic and acidic residues. Residues Ser-1–Ser-56 are disordered. Polar residues predominate over residues Leu-17–Asp-27. Positions Ser-32–Cys-51 are enriched in low complexity.

The protein belongs to the ODC antizyme family. Interacts with ODC1 and thereby sterically blocks ODC homodimerization.

Its function is as follows. Ornithine decarboxylase (ODC) antizyme protein that negatively regulates ODC activity and intracellular polyamine biosynthesis and uptake in response to increased intracellular polyamine levels. Binds to ODC monomers, inhibiting the assembly of the functional ODC homodimer, and targets the monomers for ubiquitin-independent proteolytic destruction by the 26S proteasome. The protein is Ornithine decarboxylase antizyme (Oda) of Drosophila virilis (Fruit fly).